A 589-amino-acid chain; its full sequence is MATKSSTSQAVSKLRQPIVCVLGHVDHGKTTLLDLIRGTSVASKEPGGITQRIAATTVDISRILKETEKLNTKGLKIPGLLFIDTPGHVAFSNMRARGGALADLAILVIDINEGIMPQTVESIDILKKFKTPFIIAANKIDLIPFFTDVKTNLFTEFIRKQRQEYVNELDNRIYSIMNKLYEFGLNSDRFDRISDFTKTIAIVPVSAKKNIGVPEILMVLAGLAQRFLEREIEYRDINGHATIIEVRKEESAGITLDAVLYQGTISVGDSIAVNTKNGPAVTKVKALFVNTGKGQRALKEVKKVSAAEGIRVLISDKIDVISGSPMIVVRDNLDQVMKEIEEESKVDIPLSEEGIYVKAEAIGSLEAISYELNKQGIKIKQAQVGDITKRDIMDVSTLPDPINRIIVGFNVSVLPEARDAMSSSDVSIVTGDIIYKIVEDTQKVMDERKKMLLQGRKMSMPVPSRIRILPQYIFRASKPVIVGVRVETGQIKVGDNLIRGDGKYAGTIKSIRNEDVSVRYQDAPAEVAVAIDNVTLNRQIFPDDVLYVDITENVVKELRRAPMEKEIMDTLEEIIRIKRKDNPFWGTRV.

Residues 14–229 (LRQPIVCVLG…LAGLAQRFLE (216 aa)) form the tr-type G domain. Residues 23 to 30 (GHVDHGKT) are G1. Residue 23 to 30 (GHVDHGKT) participates in GTP binding. A G2 region spans residues 48 to 52 (GITQR). Positions 84–87 (DTPG) are G3. GTP-binding positions include 84–88 (DTPGH) and 138–141 (NKID). Residues 138 to 141 (NKID) are G4. The G5 stretch occupies residues 206 to 208 (SAK).

It belongs to the TRAFAC class translation factor GTPase superfamily. Classic translation factor GTPase family. IF-2 subfamily.

Functionally, function in general translation initiation by promoting the binding of the formylmethionine-tRNA to ribosomes. Seems to function along with eIF-2. This is Probable translation initiation factor IF-2 (infB) from Thermoplasma acidophilum (strain ATCC 25905 / DSM 1728 / JCM 9062 / NBRC 15155 / AMRC-C165).